The chain runs to 106 residues: A-type ATP synthase subunit F (106 aa).

Belongs to the V-ATPase F subunit family. In terms of assembly, has multiple subunits with at least A(3), B(3), C, D, E, F, H, I and proteolipid K(x).

The protein resides in the cell membrane. Functionally, component of the A-type ATP synthase that produces ATP from ADP in the presence of a proton gradient across the membrane. The protein is A-type ATP synthase subunit F of Methanosphaera stadtmanae (strain ATCC 43021 / DSM 3091 / JCM 11832 / MCB-3).